The primary structure comprises 145 residues: 3-hydroxyacyl-[acyl-carrier-protein] dehydratase FabZ (145 aa).

Residue His47 is part of the active site.

It belongs to the thioester dehydratase family. FabZ subfamily.

It localises to the cytoplasm. It carries out the reaction a (3R)-hydroxyacyl-[ACP] = a (2E)-enoyl-[ACP] + H2O. In terms of biological role, involved in unsaturated fatty acids biosynthesis. Catalyzes the dehydration of short chain beta-hydroxyacyl-ACPs and long chain saturated and unsaturated beta-hydroxyacyl-ACPs. This is 3-hydroxyacyl-[acyl-carrier-protein] dehydratase FabZ from Thiobacillus denitrificans (strain ATCC 25259 / T1).